The sequence spans 472 residues: Guanine nucleotide-binding protein alpha-1 subunit (472 aa).

Residue glycine 2 is the site of N-myristoyl glycine attachment. Cysteine 3 carries S-palmitoyl cysteine lipidation. The G-alpha domain maps to 40-472 (NEIKLLLLGA…QQNLKKIGII (433 aa)). Residues 43 to 56 (KLLLLGAGESGKST) are G1 motif. GTP-binding residues include glutamate 51, serine 52, glycine 53, lysine 54, serine 55, and threonine 56. Serine 55 is a binding site for Mg(2+). Residues 127 to 235 (LDYINASVAG…REIQGQNRRN (109 aa)) form an insert; not present in other G-proteins region. Residues 162–199 (GRAKAAFDEDGNISNVKSDTDRDAETVTQNEDADRNNS) form a disordered region. Lysine 165 is covalently cross-linked (Glycyl lysine isopeptide (Lys-Gly) (interchain with G-Cter in ubiquitin)). A G2 motif region spans residues 292 to 300 (DILKGRIKT). Residues leucine 294, threonine 300, glycine 322, asparagine 388, lysine 389, aspartate 391, and alanine 444 each contribute to the GTP site. Threonine 300 contacts Mg(2+). Positions 315 to 324 (FKVLDAGGQR) are G3 motif. The G4 motif stretch occupies residues 384-391 (ILFLNKID). The tract at residues 442-447 (TCATDT) is G5 motif.

The protein belongs to the G-alpha family. G(q) subfamily. In terms of assembly, g proteins are composed of 3 units; alpha, beta and gamma. The alpha chain contains the guanine nucleotide binding site. In its GDP-bound form, binds to the G protein beta-gamma dimer STE4-STE18. Directly interacts with the beta subunit STE4. Probably forms preactivation complexes with unligated receptors STE2 and STE3. Interacts with FUS3. Pheromone-induced activation of GPA1 increases its association with FUS3. Interacts with SCP160. SCP160 binds specifically to the GTP-bound form of GPA1. Interacts with the phosphatidylinositol 3-kinase (PI3K) subunits VPS15 and VPS34 at the endosome. The GTP-bound form of GPA1 binds directly and selectively to the catalytic subunit VPS34, while the GDP-bound form binds to VPS15, which appears to function as an alternative G protein beta subunit for GPA1. Interacts with regulators of G protein signaling (RGS) proteins MDM1, RAX1, RGS2 and SST2, but SST2 alone binds preferentially to the transition state conformation of GPA1, indicating that it acts as a GAP for this G protein. Requires Mg(2+) as cofactor. N-myristoylation by NMT1 is pheromone-stimulated and required for palmitoylation of Cys-3. This lipid modification anchors the protein to membranes. Depalmitoylated by YLR118C/APT1. Post-translationally, monoubiquitination targets the protein for degradation to the vacuole, and polyubiquitination tags the protein for degradation by the proteasome. This may be an additional signaling regulation mechanism.

The protein resides in the cell membrane. Its subcellular location is the endosome membrane. Its activity is regulated as follows. Alternates between an inactive form bound to GDP and an active form bound to GTP. Activated by the G protein coupled receptors (GPCRs) STE2 and STE3, which serve as guanine nucleotide-exchange factors (GEFs), and inactivated by SST2, probably acting as a GTPase-activating protein (GAP). Its function is as follows. Alpha subunit of the heterotrimeric guanine nucleotide-binding protein (G protein) that mediates mating pheromone signal transduction. Binding of alpha-factor or a-factor to its cognate transmembrane receptor STE2 and STE3, respectively, allows the receptor to serve as a guanine nucleotide exchange factor (GEF) on GPA1. The exchange of GDP for GTP on the G protein alpha subunit alters its interaction with the G protein beta subunit STE4, leading to dissociation of the G protein beta-gamma dimer STE4-STE18. The dissociated subunits activate downstream effectors to activate the mating response pathway and induce changes necessary to produce mating-competent cells. STE4-STE18 activate the downstream pheromone signaling MAP kinase cascade leading to expression of mating-specific genes, inducing cell cycle arrest in G1, promoting polarized cell growth to form mating projections (shmoos), and establishing the changes in plasma membrane, cell wall and nuclear envelope to permit cell-cell fusion (plasmogamy) and fusion of the two haploid nuclei (karyogamy). GPA1 transmits a signal that requires direct binding to the effector enzyme PI3K located at the endosome, promoting increased PI3 production. The intrinsic GTPase activity of GPA1 determines the duration of signaling, and is dramatically accelerated by the RGS protein SST2. In unstimulated cells, GDP-bound GPA1 sequesters the G protein beta-gamma subunit STE4-STE18, preventing it from activating the downstream effectors. Also down-regulates the signal by inhibiting the pheromone-induced accumulation of FUS3 in the nucleus. The protein is Guanine nucleotide-binding protein alpha-1 subunit (GPA1) of Saccharomyces cerevisiae (strain ATCC 204508 / S288c) (Baker's yeast).